A 221-amino-acid polypeptide reads, in one-letter code: 7-carboxy-7-deazaguanine synthase (221 aa).

Substrate-binding positions include 12–14 (ING) and arginine 27. In terms of domain architecture, Radical SAM core spans 18-216 (KSGQLSVFIR…IQIHKIIWNP (199 aa)). Residues cysteine 31, cysteine 35, and cysteine 38 each contribute to the [4Fe-4S] cluster site. Mg(2+) is bound at residue threonine 40. Threonine 73 provides a ligand contact to substrate. Glycine 75 is a binding site for S-adenosyl-L-methionine.

It belongs to the radical SAM superfamily. 7-carboxy-7-deazaguanine synthase family. Homodimer. [4Fe-4S] cluster serves as cofactor. Requires S-adenosyl-L-methionine as cofactor. Mg(2+) is required as a cofactor.

The catalysed reaction is 6-carboxy-5,6,7,8-tetrahydropterin + H(+) = 7-carboxy-7-deazaguanine + NH4(+). It functions in the pathway purine metabolism; 7-cyano-7-deazaguanine biosynthesis. In terms of biological role, catalyzes the complex heterocyclic radical-mediated conversion of 6-carboxy-5,6,7,8-tetrahydropterin (CPH4) to 7-carboxy-7-deazaguanine (CDG), a step common to the biosynthetic pathways of all 7-deazapurine-containing compounds. This chain is 7-carboxy-7-deazaguanine synthase, found in Clostridium acetobutylicum (strain ATCC 824 / DSM 792 / JCM 1419 / IAM 19013 / LMG 5710 / NBRC 13948 / NRRL B-527 / VKM B-1787 / 2291 / W).